A 257-amino-acid chain; its full sequence is Diphthine synthase (257 aa).

Residues Ile-11, Asp-89, Ile-92, 117–118 (SV), Leu-169, Leu-210, and His-235 each bind S-adenosyl-L-methionine.

The protein belongs to the diphthine synthase family. As to quaternary structure, homodimer.

It catalyses the reaction 2-[(3S)-amino-3-carboxypropyl]-L-histidyl-[translation elongation factor 2] + 3 S-adenosyl-L-methionine = diphthine-[translation elongation factor 2] + 3 S-adenosyl-L-homocysteine + 3 H(+). It functions in the pathway protein modification; peptidyl-diphthamide biosynthesis. In terms of biological role, S-adenosyl-L-methionine-dependent methyltransferase that catalyzes the trimethylation of the amino group of the modified target histidine residue in translation elongation factor 2 (EF-2), to form an intermediate called diphthine. The three successive methylation reactions represent the second step of diphthamide biosynthesis. This chain is Diphthine synthase, found in Saccharolobus solfataricus (strain ATCC 35092 / DSM 1617 / JCM 11322 / P2) (Sulfolobus solfataricus).